Consider the following 348-residue polypeptide: D-alanine--D-alanine ligase (348 aa).

The region spanning 132–334 (KRVLESIGIP…YPDLIEELVT (203 aa)) is the ATP-grasp domain. Position 162-217 (162-217 (LARLTFPIFVKPANMGSSVGISKAQTKVELRKAIQLALTYDSRVLIEQGVVAREIE)) interacts with ATP. Residues aspartate 288, glutamate 301, and asparagine 303 each coordinate Mg(2+).

Belongs to the D-alanine--D-alanine ligase family. Mg(2+) serves as cofactor. Mn(2+) is required as a cofactor.

It localises to the cytoplasm. It catalyses the reaction 2 D-alanine + ATP = D-alanyl-D-alanine + ADP + phosphate + H(+). It functions in the pathway cell wall biogenesis; peptidoglycan biosynthesis. Functionally, cell wall formation. In Streptococcus pyogenes serotype M12 (strain MGAS2096), this protein is D-alanine--D-alanine ligase.